The primary structure comprises 334 residues: Phosphoribosylformylglycinamidine cyclo-ligase (334 aa).

Belongs to the AIR synthase family.

It localises to the cytoplasm. The enzyme catalyses 2-formamido-N(1)-(5-O-phospho-beta-D-ribosyl)acetamidine + ATP = 5-amino-1-(5-phospho-beta-D-ribosyl)imidazole + ADP + phosphate + H(+). Its pathway is purine metabolism; IMP biosynthesis via de novo pathway; 5-amino-1-(5-phospho-D-ribosyl)imidazole from N(2)-formyl-N(1)-(5-phospho-D-ribosyl)glycinamide: step 2/2. The polypeptide is Phosphoribosylformylglycinamidine cyclo-ligase (Pyrococcus furiosus (strain ATCC 43587 / DSM 3638 / JCM 8422 / Vc1)).